The chain runs to 345 residues: Protein SHI RELATED SEQUENCE 7 (345 aa).

A disordered region spans residues 7–28 (LGGRDHNKQDHHQEKDHNEDKS). Over residues 9–28 (GRDHNKQDHHQEKDHNEDKS) the composition is skewed to basic and acidic residues. Zn(2+)-binding residues include Cys119, Cys122, Cys130, Cys135, Cys139, and Cys146. The zn(2)-C6 fungal-type; degenerate DNA-binding region spans 119-146 (CQDCGNQAKKDCPHMRCRTCCKSRGFDC). Positions 168–200 (AVLPAKRIRDANSRGGGDDDDDDKEDEKNDSCG) are disordered. Positions 256–259 (IGGH) match the Required for homo- and heterodimerization motif.

Belongs to the SHI protein family. In terms of tissue distribution, mainly expressed in the filaments of flowers, the shoot apex regions and pollen. Also present in leaves.

Its subcellular location is the nucleus. In terms of biological role, transcription activator that binds DNA on 5'-ACTCTAC-3' and promotes auxin homeostasis-regulating gene expression (e.g. YUC genes), as well as genes affecting stamen development, cell expansion and timing of flowering. Synergistically with other SHI-related proteins, regulates gynoecium, stamen and leaf development in a dose-dependent manner, controlling apical-basal patterning. Promotes style and stigma formation, and influences vascular development during gynoecium development. May also have a role in the formation and/or maintenance of the shoot apical meristem (SAM). Regulates anther dehiscence and floral development. The protein is Protein SHI RELATED SEQUENCE 7 (SRS7) of Arabidopsis thaliana (Mouse-ear cress).